A 329-amino-acid polypeptide reads, in one-letter code: Phosphoenolpyruvate transferase (329 aa).

A 7,8-didemethyl-8-hydroxy-5-deazariboflavin-binding site is contributed by aspartate 61.

It belongs to the CofD family. As to quaternary structure, homodimer. The cofactor is Mg(2+).

It catalyses the reaction enolpyruvoyl-2-diphospho-5'-guanosine + 7,8-didemethyl-8-hydroxy-5-deazariboflavin = dehydro coenzyme F420-0 + GMP + H(+). The protein operates within cofactor biosynthesis; coenzyme F420 biosynthesis. Functionally, catalyzes the transfer of the phosphoenolpyruvate moiety from enoylpyruvoyl-2-diphospho-5'-guanosine (EPPG) to 7,8-didemethyl-8-hydroxy-5-deazariboflavin (FO) with the formation of dehydro coenzyme F420-0 and GMP. This is Phosphoenolpyruvate transferase from Mycobacterium ulcerans (strain Agy99).